The following is a 331-amino-acid chain: CRISPR-associated endonuclease Cas1 1 (331 aa).

Mn(2+) is bound by residues Glu161, His226, and Glu241.

The protein belongs to the CRISPR-associated endonuclease Cas1 family. Homodimer, forms a heterotetramer with a Cas2 homodimer. Requires Mg(2+) as cofactor. Mn(2+) serves as cofactor.

Its function is as follows. CRISPR (clustered regularly interspaced short palindromic repeat), is an adaptive immune system that provides protection against mobile genetic elements (viruses, transposable elements and conjugative plasmids). CRISPR clusters contain spacers, sequences complementary to antecedent mobile elements, and target invading nucleic acids. CRISPR clusters are transcribed and processed into CRISPR RNA (crRNA). Acts as a dsDNA endonuclease. Involved in the integration of spacer DNA into the CRISPR cassette. This chain is CRISPR-associated endonuclease Cas1 1, found in Methanospirillum hungatei JF-1 (strain ATCC 27890 / DSM 864 / NBRC 100397 / JF-1).